We begin with the raw amino-acid sequence, 32 residues long: MSDIN-like toxin proprotein 1 (32 aa).

A propeptide spanning residues 1–10 is cleaved from the precursor; sequence MSDINATCLP. The segment at residues 11 to 17 is a cross-link (cyclopeptide (Ala-Pro)); the sequence is AWLALCP. Residues 18–32 constitute a propeptide that is removed on maturation; the sequence is CVGDDVNPTLTRGGT.

Belongs to the MSDIN fungal toxin family. Post-translationally, processed by the macrocyclase-peptidase enzyme POPB to yield a toxic cyclic heptapeptide. POPB first removes 10 residues from the N-terminus. Conformational trapping of the remaining peptide forces the enzyme to release this intermediate rather than proceed to macrocyclization. The enzyme rebinds the remaining peptide in a different conformation and catalyzes macrocyclization of the N-terminal 7 residues.

Its function is as follows. Probable toxin that belongs to the MSDIN-like toxin family responsible for a large number of food poisoning cases and deaths. This Amanita fuligineoides protein is MSDIN-like toxin proprotein 1.